The chain runs to 361 residues: Biotin synthase (361 aa).

The region spanning 83 to 308 (PEVEVEGIIS…RTILRYAGGR (226 aa)) is the Radical SAM core domain. 3 residues coordinate [4Fe-4S] cluster: cysteine 98, cysteine 102, and cysteine 105. Positions 141, 174, 233, and 303 each coordinate [2Fe-2S] cluster.

The protein belongs to the radical SAM superfamily. Biotin synthase family. As to quaternary structure, homodimer. [4Fe-4S] cluster serves as cofactor. [2Fe-2S] cluster is required as a cofactor.

The catalysed reaction is (4R,5S)-dethiobiotin + (sulfur carrier)-SH + 2 reduced [2Fe-2S]-[ferredoxin] + 2 S-adenosyl-L-methionine = (sulfur carrier)-H + biotin + 2 5'-deoxyadenosine + 2 L-methionine + 2 oxidized [2Fe-2S]-[ferredoxin]. It functions in the pathway cofactor biosynthesis; biotin biosynthesis; biotin from 7,8-diaminononanoate: step 2/2. Functionally, catalyzes the conversion of dethiobiotin (DTB) to biotin by the insertion of a sulfur atom into dethiobiotin via a radical-based mechanism. In Parafrankia sp. (strain EAN1pec), this protein is Biotin synthase.